The chain runs to 506 residues: NADH-quinone oxidoreductase subunit N (506 aa).

14 consecutive transmembrane segments (helical) span residues 14-34 (MVPE…DLFF), 40-60 (YVAL…ITLY), 72-92 (FVLD…AALI), 109-129 (GEYY…ASSV), 131-151 (FVTL…LVGI), 166-186 (VING…LYGI), 209-229 (LLLA…IATV), 256-276 (MAGF…VSVQ), 286-306 (MSIY…VVAL), 314-334 (LFAY…VALS), 343-363 (FYML…HGLI), 385-405 (AIVM…AGFI), 420-440 (AHYV…VYYF), and 465-485 (IVMS…MIGY).

The protein belongs to the complex I subunit 2 family. NDH-1 is composed of 14 different subunits. Subunits NuoA, H, J, K, L, M, N constitute the membrane sector of the complex.

The protein localises to the cell membrane. The enzyme catalyses a quinone + NADH + 5 H(+)(in) = a quinol + NAD(+) + 4 H(+)(out). Its function is as follows. NDH-1 shuttles electrons from NADH, via FMN and iron-sulfur (Fe-S) centers, to quinones in the respiratory chain. The immediate electron acceptor for the enzyme in this species is believed to be a menaquinone. Couples the redox reaction to proton translocation (for every two electrons transferred, four hydrogen ions are translocated across the cytoplasmic membrane), and thus conserves the redox energy in a proton gradient. The polypeptide is NADH-quinone oxidoreductase subunit N (Bacillus anthracis).